Reading from the N-terminus, the 282-residue chain is Globin-related protein glb-13 (282 aa).

The tract at residues 1-46 is disordered; the sequence is MGQENSKCPHQSLAEKRYKVERPKTKKVSSGSATERCLSTQSDEKN. The segment covering 13–23 has biased composition (basic and acidic residues); the sequence is LAEKRYKVERP. Over residues 28-41 the composition is skewed to polar residues; it reads VSSGSATERCLSTQ. Positions 100–249 constitute a Globin domain; sequence FLTRRERILL…IISFMRRGFD (150 aa). Heme b contacts are provided by His162 and His194.

It belongs to the globin family.

Its function is as follows. Involved in oxidative stress resistance. The protein is Globin-related protein glb-13 of Caenorhabditis elegans.